A 181-amino-acid chain; its full sequence is Oligoribonuclease (181 aa).

The region spanning 8-171 (LIWVDLEMTG…DDIRESIAEL (164 aa)) is the Exonuclease domain. The active site involves Y129.

The protein belongs to the oligoribonuclease family.

Its subcellular location is the cytoplasm. In terms of biological role, 3'-to-5' exoribonuclease specific for small oligoribonucleotides. This chain is Oligoribonuclease, found in Vibrio parahaemolyticus serotype O3:K6 (strain RIMD 2210633).